The primary structure comprises 256 residues: MAFSAEDVLKEYDRRRRMEALLLSLYYPNDRKLLDYKEWSPPRVQVECPKAPVEWNNPPSEKGLIVGHFSGIKYKGEKAQASEVDVNKMCCWVSKFKDAMRRYQGIQTCKIPGKVLSDLDAKIKAYNLTVEGVEGFVRYSRVTKQHVAAFLKELRHSKQYENVNLIHYILTDKRVDIQHLEKDLVKDFKALVESAHRMRQGHMINVKYILYQLLKKHGHGPDGPDILTVKTGSKGVLYDDSFRKIYTDLGWKFTPL.

In terms of biological role, transcription activation. The protein is Putative transcription factor 001R of Frog virus 3 (isolate Goorha) (FV-3).